The chain runs to 248 residues: DNA repair protein RecO (248 aa).

Belongs to the RecO family.

In terms of biological role, involved in DNA repair and RecF pathway recombination. This is DNA repair protein RecO from Rubrobacter xylanophilus (strain DSM 9941 / JCM 11954 / NBRC 16129 / PRD-1).